The sequence spans 191 residues: MPALPILDPADLPADAVEVGRIADAWGVKGWFKVLPYSADPEALFSSKRWYLQPSEKGAKSFFTGTVLLPIRQAREHSDSVVAQAQGVDDRDAAEALRGARIFVPRSSFPTAAEDEYYWVDLIGLEVVNREGVALGSVRELLATGPQTTLVLSFPQEGGKEGERMIPFVSAFVDRVDIAGRRIVVDWQPDY.

Positions 114–191 (EDEYYWVDLI…RIVVDWQPDY (78 aa)) constitute a PRC barrel domain.

This sequence belongs to the RimM family. As to quaternary structure, binds ribosomal protein uS19.

The protein resides in the cytoplasm. In terms of biological role, an accessory protein needed during the final step in the assembly of 30S ribosomal subunit, possibly for assembly of the head region. Essential for efficient processing of 16S rRNA. May be needed both before and after RbfA during the maturation of 16S rRNA. It has affinity for free ribosomal 30S subunits but not for 70S ribosomes. The sequence is that of Ribosome maturation factor RimM from Paracidovorax citrulli (strain AAC00-1) (Acidovorax citrulli).